The following is a 396-amino-acid chain: Unsaturated chondroitin disaccharide hydrolase (396 aa).

The active-site Nucleophile is the Asp-113. Residues Asp-113, Asp-173, Gly-231, Thr-233, Arg-245, Trp-249, Ser-363, and Ser-366 each coordinate substrate. Residue Asp-173 is the Proton donor of the active site.

The protein belongs to the glycosyl hydrolase 88 family. Monomer.

The enzyme catalyses beta-D-4-deoxy-Delta(4)-GlcpA-(1-&gt;3)-beta-D-GalpNAc6S + H2O = N-acetyl-beta-D-galactosamine 6-sulfate + 5-dehydro-4-deoxy-D-glucuronate. Catalyzes the hydrolysis of unsaturated hyaluronate and chondroitin disaccharides. Also degrades unsaturated heparin disaccharides. Releases 4-deoxy-4,5-didehydro D-glucuronic acid or 4-deoxy-4,5-didehydro L-iduronic acid from chondroitin disaccharides, hyaluronan disaccharides and heparin disaccharides and cleaves both glycosidic (1-&gt;3) and (1-&gt;4) bonds. Prefers sulfated glycosaminoglycans compared to unsulfated glycosaminoglycans. Probably required for mammalian cells invasion through the degradation of extracellular sulfated glycosaminoglycans such as chondroitin and hyaluronan. This chain is Unsaturated chondroitin disaccharide hydrolase (ugl), found in Streptococcus pneumoniae (strain ATCC BAA-255 / R6).